A 287-amino-acid polypeptide reads, in one-letter code: uncharacterized protein (287 aa).

Active-site charge relay system residues include Thr-43 and Tyr-104. Residue Tyr-130 is the Proton donor of the active site. The Schiff-base intermediate with substrate role is filled by Lys-158.

The protein belongs to the DapA family. In terms of assembly, homotetramer.

It localises to the cytoplasm. This is an uncharacterized protein from Pyrococcus horikoshii (strain ATCC 700860 / DSM 12428 / JCM 9974 / NBRC 100139 / OT-3).